A 637-amino-acid polypeptide reads, in one-letter code: Early transcription factor 70 kDa subunit (637 aa).

A Helicase ATP-binding domain is found at 32-185 (RTIIDENRSV…GHIIDLMSEE (154 aa)). An ATP-binding site is contributed by 45-52 (HIMGSGKT). A DEXH box motif is present at residues 135–138 (DEAH). Residues 327–507 (KFKYFINRIQ…VLPFDIKKLL (181 aa)) enclose the Helicase C-terminal domain.

This sequence belongs to the helicase family. VETF subfamily. Heterodimer of a 70 kDa and a 82 kDa subunit. Part of the early transcription complex composed of ETF, RAP94/OPG109, and the DNA-directed RNA polymerase.

It localises to the virion. In terms of biological role, acts with RNA polymerase to initiate transcription from early gene promoters. Is recruited by the RPO-associated protein of 94 kDa RAP94/OPG109 to form the early transcription complex, which also contains the core RNA polymerase. ETF heterodimer binds to early gene promoters. The polypeptide is Early transcription factor 70 kDa subunit (OPG118) (Homo sapiens (Human)).